Reading from the N-terminus, the 4563-residue chain is Apolipoprotein B-100 (4563 aa).

Positions 1 to 27 (MDPPRPALLALLALPALLLLLLAGARA) are cleaved as a signal peptide. Residues 32–126 (LENVSLVCPK…KNSEEFAAAM (95 aa)) are heparin-binding. N-linked (GlcNAc...) asparagine glycosylation is present at asparagine 34. 2 disulfide bridges follow: cysteine 39/cysteine 88 and cysteine 78/cysteine 97. One can recognise a Vitellogenin domain in the interval 46–672 (FKHLRKYTYN…PNNYLPKESM (627 aa)). Asparagine 185 carries an N-linked (GlcNAc...) asparagine glycan. Intrachain disulfides connect cysteine 186–cysteine 212, cysteine 245–cysteine 261, cysteine 385–cysteine 390, and cysteine 478–cysteine 513. The segment at 232–306 (TRPLSTLISS…RFFGEGTKKM (75 aa)) is heparin-binding. The segment at 902–959 (NTNFFHESGLEAHVALKAGKLKFIIPSPKRPVKLLSGGNTLHLVSTTKTEVIPPLIEN) is heparin-binding. Cysteines 966 and 976 form a disulfide. A glycan (N-linked (GlcNAc...) asparagine) is linked at asparagine 983. Cysteine 1112 carries the S-palmitoyl cysteine lipid modification. Residues asparagine 1368, asparagine 1377, and asparagine 1523 are each glycosylated (N-linked (GlcNAc...) asparagine). Lysine 2004 is modified (N6-acetyllysine). The segment at 2043-2178 (RDAVEKPQEF…EKLSQLQTYM (136 aa)) is heparin-binding. N-linked (GlcNAc...) asparagine glycosylation is found at asparagine 2239, asparagine 2560, asparagine 2779, asparagine 2982, and asparagine 3101. Residues 3161-3236 (FLKTTKQSFD…KIKFDKYKAE (76 aa)) form a heparin-binding region. Residues 3174 to 3184 (KAQYKKNKHRH) are basic (possible receptor binding region). Cysteine 3194 and cysteine 3324 are disulfide-bonded. A glycan (N-linked (GlcNAc...) asparagine) is linked at asparagine 3224. A Phosphoserine modification is found at serine 3279. N-linked (GlcNAc...) asparagine glycosylation is found at asparagine 3336 and asparagine 3358. An LDL receptor binding region spans residues 3373–3393 (VIDALQYKLEGTTRLTRKRGL). A heparin-binding region spans residues 3383 to 3516 (GTTRLTRKRG…REYSGTIASE (134 aa)). The basic (possible receptor binding region) stretch occupies residues 3386–3394 (RLTRKRGLK). N-linked (GlcNAc...) asparagine glycosylation is found at asparagine 3411, asparagine 3465, and asparagine 3895. Serine 4048 carries the phosphoserine; by FAM20C modification. Threonine 4052 carries the post-translational modification Phosphothreonine. N-linked (GlcNAc...) asparagine glycans are attached at residues asparagine 4237 and asparagine 4431.

In terms of assembly, interacts with PCSK9. Interacts with MTTP. Interacts with AUP1. Interacts with CIDEB. In terms of processing, palmitoylated; structural requirement for proper assembly of the hydrophobic core of the lipoprotein particle.

It is found in the cytoplasm. It localises to the secreted. The protein localises to the lipid droplet. In terms of biological role, apolipoprotein B is a major protein constituent of chylomicrons (apo B-48), LDL (apo B-100) and VLDL (apo B-100). Apo B-100 functions as a recognition signal for the cellular binding and internalization of LDL particles by the apoB/E receptor. The chain is Apolipoprotein B-100 (APOB) from Homo sapiens (Human).